The following is a 640-amino-acid chain: 1-deoxy-D-xylulose-5-phosphate synthase (640 aa).

Residues His-78 and 119–121 (GHS) contribute to the thiamine diphosphate site. Asp-151 lines the Mg(2+) pocket. Thiamine diphosphate-binding positions include 152–153 (GA), Asn-180, Tyr-289, and Glu-371. Residue Asn-180 coordinates Mg(2+).

The protein belongs to the transketolase family. DXPS subfamily. As to quaternary structure, homodimer. Mg(2+) serves as cofactor. The cofactor is thiamine diphosphate.

The catalysed reaction is D-glyceraldehyde 3-phosphate + pyruvate + H(+) = 1-deoxy-D-xylulose 5-phosphate + CO2. It functions in the pathway metabolic intermediate biosynthesis; 1-deoxy-D-xylulose 5-phosphate biosynthesis; 1-deoxy-D-xylulose 5-phosphate from D-glyceraldehyde 3-phosphate and pyruvate: step 1/1. Its function is as follows. Catalyzes the acyloin condensation reaction between C atoms 2 and 3 of pyruvate and glyceraldehyde 3-phosphate to yield 1-deoxy-D-xylulose-5-phosphate (DXP). The polypeptide is 1-deoxy-D-xylulose-5-phosphate synthase (Bartonella quintana (strain Toulouse) (Rochalimaea quintana)).